The primary structure comprises 197 residues: Imidazoleglycerol-phosphate dehydratase (197 aa).

The protein belongs to the imidazoleglycerol-phosphate dehydratase family.

It is found in the cytoplasm. The enzyme catalyses D-erythro-1-(imidazol-4-yl)glycerol 3-phosphate = 3-(imidazol-4-yl)-2-oxopropyl phosphate + H2O. It functions in the pathway amino-acid biosynthesis; L-histidine biosynthesis; L-histidine from 5-phospho-alpha-D-ribose 1-diphosphate: step 6/9. The sequence is that of Imidazoleglycerol-phosphate dehydratase from Bradyrhizobium diazoefficiens (strain JCM 10833 / BCRC 13528 / IAM 13628 / NBRC 14792 / USDA 110).